Consider the following 2635-residue polypeptide: MSTKAEQFASKIRYLQEYHNRVLHNIYPVPSGTDIANTLKYFSQTLLSILSRTGKKENQDASNLTVPMTMCLFPVPFPLTPSLRPQVSSINPTVTRSLLYSVLRDAPSERGPQSRDAQLSDYPSLDYQGLYVTLVTLLDLVPLLQHGQHDLGQSIFYTTTCLLPFLNDDILSTLPYTMISTLATFPPFLHKDIIEYLSTSFLPMAILGSSRREGVPAHVNLSASSMLMIAMQYTSNPVYHCQLLECLMKYKQEVWKDLLYVIAYGPSQVKPPAVQMLFHYWPNLKPPGAISEYRGLQYTAWNPIHCQHIECHNAINKPAVKMCIDPSLSVALGDKPPPLYLCEECSERIAGDHSEWLIDVLLPQAEISAICQKKNCSSHVRRAVVTCFSAGCCGRHGNRPVRYCKRCHSNHHSNEVGAAAETHLYQTSPPPINTRECGAEELVCAVEAVISLLKEAEFHAEQREHELNRRRQLGLSSSHHSLDNADFDNKDDDKHDQRLLSQFGIWFLVSLCTPSENTPTESLARLVAMVFQWFHSTAYMMDDEVGSLVEKLKPQFVTKWLKTVCDVRFDVMVMCLLPKPMEFARVGGYWDKSCSTVTQLKEGLNRILCLIPYNVINQSVWECIMPEWLEAIRTEVPDNQLKEFREVLSKMFDIELCPLPFSMEEMFGFISCRFTGYPSSVQEQALLWLHVLSELDIMVPLQLLISMFSDGVNSVKELANQRKSRVSELAGNLASRRVSVASDPGRRVQHNMLSPFHSPFQSPFRSPLRSPFRSPFKNFGHPGGRTIDFDCEDDEMNLNCFILMFDLLLKQMELQDDGITMGLEHSLSKDIISIINNVFQAPWGGSHTCQKDEKAIECNLCQSSILCYQLACELLERLAPKEESRLVEPTDSLEDSLLSSRPEFIIGPEGEEEENPASKHGENPGNCTEPVEHAAVKNDTERKFCYQQLPVTLRLIYTIFQEMAKFEEPDILFNMLNCLKILCLHGECLYIARKDHPQFLAYIQDHMLIASLWRVVKSEFSQLSSLAVPLLLHALSLPHGADIFWTIINGNFNSKDWKMRFEAVEKVAVICRFLDIHSVTKNHLLKYSLAHAFCCFLTAVEDVNPAVATRAGLLLDTIKRPALQGLCLCLDFQFDTVVKDRPTILSKLLLLHFLKQDIPALSWEFFVNRFETLSLEAQLHLDCNKEFPFPTTITAVRTNVANLSDAALWKIKRARFARNRQKSVRSLRDSVKGPVESKRALSLPETLTSKIRQQSPENDNTIKDLLPEDAGIDHQTVHQLITVLMKFMAKDESSAESDISSAKAFNTVKRHLYVLLGYDQQEGCFMIAPQKMRLSTCFNAFIAGIAQVMDYNINLGKHLLPLVVQVLKYCSCPQLRHYFQQPPRCSLWSLKPHIRQMWLKALLVILYKYPYRDCDISKILLHLIHITVNTLNAQYHSCKPHATAGPLYSDNSNISRYSEKEKGEIELAEYRETGALQDSLLHCVREESIPKKKLRSFKQKSLDIGNADSLLFTLDEHRRKSCIDRCDIEKPPTQAAYIAQRPNDPGRSRQNSATRPDNSEIPENPAMEGFPDARRPVIPEVRLNCMETFEVKVDSPVKPAPKEDLDLIDLSSDSTSGPEKHSILSTSDSDSLVFEPLPPLRIVESDEEEETMNQGDDGPSGKNAASSPSVPSHPSVLSLSTAPLVQVSVEDCSKDFSSKDSGNNQSAGNTDSALITLEDPMDAEGSSKPEELPEFSCGSPLTLKQKRDLLQKSFALPEMSLDDHPDPGTEGEKPGELMPSSGAKTVLLKVPEDAENPTESEKPDTSAESDTEQNPERKVEEDGAEESEFKIQIVPRQRKQRKIAVSAIQREYLDISFNILDKLGEQKDPDPSTKGLSTLEMPRESSSAPTLDAGVPETSSHSSISTQYRQMKRGSLGVLTMSQLMKRQLEHQSSAPHNISNWDTEQIQPGKRQCNVPTCLNPDLEGQPLRMRGATKSSLLSAPSIVSMFVPAPEEFTDEQPTVMTDKCHDCGAILEEYDEETLGLAIVVLSTFIHLSPDLAAPLLLDIMQSVGRLASSTTFSNQAESMMVPGNAAGVAKQFLRCIFHQLAPNGIFPQLFQSTIKDGTFLRTLASSLMDFNELSSIAALSQLLEGLNNKKNLPAGGAMIRCLENIATFMEALPMDSPSSLWTTISNQFQTFFAKLPCVLPLKCSLDSSLRIMICLLKIPSTNATRSLLEPFSKLLSFVIQNAVFTLAYLVELCGLCYRAFTKERDKFYLSRSVVLELLQALKLKSPLPDTNLLLLVQFICADAGTKLAESTILSKQMIASVPGCGTAAMECVRQYINEVLDFMADMHTLTKLKSHMKTCSQPLHEDTFGGHLKVGLAQIAAMDISRGNHRDNKAVIRYLPWLYHPPSAMQQGPKEFIECVSHIRLLSWLLLGSLTHNAVCPNASSPCLPIPLDAGSHVADHLIVILIGFPEQSKTSVLHMCSLFHAFIFAQLWTVYCEQSAVATNLQNQNEFSFTAILTALEFWSRVTPSILQLMAHNKVMVEMVCLHVISLMEALQECNSTIFVKLIPMWLPMIQSNIKHLSAGLQLRLQAIQNHVNHHSLRTLPGSGQSSAGLAALRKWLQCTQFKMAQVEIQSSEAASQFYPL.

Phosphoserine is present on residues Ser754 and Ser758. 6 disordered regions span residues 907–929 (GPEG…NCTE), 1538–1575 (IAQR…DARR), 1607–1678 (LIDL…SVLS), 1693–1832 (SKDF…FKIQ), 1863–1909 (LGEQ…TQYR), and 1929–1950 (LEHQ…IQPG). Residues 1666 to 1678 (SSPSVPSHPSVLS) show a composition bias toward low complexity. Over residues 1699-1713 (KDSGNNQSAGNTDSA) the composition is skewed to polar residues. Over residues 1761–1775 (LDDHPDPGTEGEKPG) the composition is skewed to basic and acidic residues. Composition is skewed to polar residues over residues 1897–1909 (ETSS…TQYR) and 1929–1947 (LEHQ…TEQI). 2 consecutive transmembrane segments (helical) span residues 2223–2243 (LLSF…ELCG) and 2466–2486 (VLHM…TVYC).

It belongs to the unc-79 family. NALCN complex consists of NALCN and auxiliary subunits, UNC79, UNC80 and NACL1. These auxiliary subunits are essential for the NALCN channel function. UNC80 bridges NALCN to UNC79.

Its subcellular location is the cell membrane. In terms of biological role, auxiliary subunit of the NALCN sodium channel complex, a voltage-gated ion channel responsible for the resting Na(+) permeability that controls neuronal excitability. Activated by neuropeptides substance P, neurotensin, and extracellular calcium that regulates neuronal excitability by controlling the sizes of NALCN-dependent sodium-leak current. The protein is Protein unc-79 homolog (UNC79) of Homo sapiens (Human).